Reading from the N-terminus, the 143-residue chain is 3-hydroxyacyl-[acyl-carrier-protein] dehydratase FabZ (143 aa).

Residue His-49 is part of the active site.

The protein belongs to the thioester dehydratase family. FabZ subfamily.

The protein resides in the cytoplasm. The enzyme catalyses a (3R)-hydroxyacyl-[ACP] = a (2E)-enoyl-[ACP] + H2O. Its function is as follows. Involved in unsaturated fatty acids biosynthesis. Catalyzes the dehydration of short chain beta-hydroxyacyl-ACPs and long chain saturated and unsaturated beta-hydroxyacyl-ACPs. The sequence is that of 3-hydroxyacyl-[acyl-carrier-protein] dehydratase FabZ from Wolbachia pipientis wMel.